A 225-amino-acid chain; its full sequence is Histone H1.11L (225 aa).

Composition is skewed to low complexity over residues 1 to 23 and 31 to 43; these read MSETAPAPAAEAAPAAAPAPAKA and AAGGAKARKPAGP. 2 disordered regions span residues 1–46 and 94–225; these read MSET…PSVT and SKGT…AKKK. The residue at position 2 (Ser2) is an N-acetylserine. The H15 domain occupies 41–114; the sequence is AGPSVTELIT…GASGSFRLSK (74 aa). Composition is skewed to basic residues over residues 123–138, 146–163, 171–189, and 198–225; these read APKKKASAAKPKKPAA, KKPKKAVAVKKSPKKAKK, KSAKSPKKVTKAVKPKKAV, and KAVKPKAAKPKAAKPKAAKAKKAAAKKK.

Belongs to the histone H1/H5 family.

Its subcellular location is the nucleus. The protein localises to the chromosome. Its function is as follows. Histones H1 are necessary for the condensation of nucleosome chains into higher-order structures. This Gallus gallus (Chicken) protein is Histone H1.11L.